The sequence spans 642 residues: Threonine--tRNA ligase (642 aa).

One can recognise a TGS domain in the interval 1-61; that stretch reads MPVITLPDGS…ETDATLSIIT (61 aa). Residues 243–534 are catalytic; sequence DHRKIGKQLD…LTEETAGYFP (292 aa). Zn(2+)-binding residues include C334, H385, and H511.

It belongs to the class-II aminoacyl-tRNA synthetase family. Homodimer. The cofactor is Zn(2+).

Its subcellular location is the cytoplasm. It carries out the reaction tRNA(Thr) + L-threonine + ATP = L-threonyl-tRNA(Thr) + AMP + diphosphate + H(+). In terms of biological role, catalyzes the attachment of threonine to tRNA(Thr) in a two-step reaction: L-threonine is first activated by ATP to form Thr-AMP and then transferred to the acceptor end of tRNA(Thr). Also edits incorrectly charged L-seryl-tRNA(Thr). The polypeptide is Threonine--tRNA ligase (Tolumonas auensis (strain DSM 9187 / NBRC 110442 / TA 4)).